An 89-amino-acid polypeptide reads, in one-letter code: Small ribosomal subunit protein uS15 (89 aa).

The protein belongs to the universal ribosomal protein uS15 family. As to quaternary structure, part of the 30S ribosomal subunit. Forms a bridge to the 50S subunit in the 70S ribosome, contacting the 23S rRNA.

One of the primary rRNA binding proteins, it binds directly to 16S rRNA where it helps nucleate assembly of the platform of the 30S subunit by binding and bridging several RNA helices of the 16S rRNA. In terms of biological role, forms an intersubunit bridge (bridge B4) with the 23S rRNA of the 50S subunit in the ribosome. The sequence is that of Small ribosomal subunit protein uS15 from Staphylococcus carnosus (strain TM300).